We begin with the raw amino-acid sequence, 711 residues long: Interferon-induced GTP-binding protein Mx2 (711 aa).

Disordered stretches follow at residues 1-26 (MPKPRMSWPYQRHRQASSPPHPHKEM) and 62-88 (MLTLSPQQPGGKSGQQTSKGPENNLYS). The segment covering 66-82 (SPQQPGGKSGQQTSKGP) has biased composition (low complexity). The Dynamin-type G domain maps to 112–383 (DLALPTIAVI…LIGHISKSLP (272 aa)). The segment at 122–129 (GDQSSGKS) is G1 motif. 122–129 (GDQSSGKS) is a GTP binding site. Residues 147–149 (ITR) form a G2 motif region. Residues 221–224 (DLPG) are G3 motif. GTP is bound by residues 221–225 (DLPGI) and 290–293 (TKPD). Positions 290 to 293 (TKPD) are G4 motif. Residues 322 to 325 (KCRG) form a G5 motif region. One can recognise a GED domain in the interval 619-710 (ITEIGVHVNA…TLSKFAQSLQ (92 aa)).

The protein belongs to the TRAFAC class dynamin-like GTPase superfamily. Dynamin/Fzo/YdjA family. As to expression, ubiquitous.

It is found in the cytoplasm. It localises to the nucleus. Its function is as follows. Interferon-induced dynamin-like GTPase with antiviral activity against influenza virus A (FLUAV). This chain is Interferon-induced GTP-binding protein Mx2 (MX2), found in Sus scrofa (Pig).